The primary structure comprises 320 residues: Lipoyl synthase (320 aa).

The segment at 1-26 is disordered; the sequence is MVTVVDRVTSRRLRHPEKMHRPDTSI. [4Fe-4S] cluster is bound by residues C59, C64, C70, C85, C89, C92, and S298. One can recognise a Radical SAM core domain in the interval 71–287; the sequence is WSQRHASFMI…AKIGKVKGFL (217 aa).

Belongs to the radical SAM superfamily. Lipoyl synthase family. Requires [4Fe-4S] cluster as cofactor.

The protein resides in the cytoplasm. The enzyme catalyses [[Fe-S] cluster scaffold protein carrying a second [4Fe-4S](2+) cluster] + N(6)-octanoyl-L-lysyl-[protein] + 2 oxidized [2Fe-2S]-[ferredoxin] + 2 S-adenosyl-L-methionine + 4 H(+) = [[Fe-S] cluster scaffold protein] + N(6)-[(R)-dihydrolipoyl]-L-lysyl-[protein] + 4 Fe(3+) + 2 hydrogen sulfide + 2 5'-deoxyadenosine + 2 L-methionine + 2 reduced [2Fe-2S]-[ferredoxin]. The protein operates within protein modification; protein lipoylation via endogenous pathway; protein N(6)-(lipoyl)lysine from octanoyl-[acyl-carrier-protein]: step 2/2. In terms of biological role, catalyzes the radical-mediated insertion of two sulfur atoms into the C-6 and C-8 positions of the octanoyl moiety bound to the lipoyl domains of lipoate-dependent enzymes, thereby converting the octanoylated domains into lipoylated derivatives. The polypeptide is Lipoyl synthase (Bartonella quintana (strain Toulouse) (Rochalimaea quintana)).